The primary structure comprises 264 residues: N-carbamoylsarcosine amidase (264 aa).

The active-site Nucleophile is Cys-177. Positions 240-264 (TVPKTLSDPQPEVEAPADPVFAEQH) are disordered.

As to quaternary structure, homotetramer. Requires sulfate as cofactor.

It catalyses the reaction N-carbamoylsarcosine + H2O + 2 H(+) = sarcosine + NH4(+) + CO2. It participates in amine and polyamine degradation; creatinine degradation; sarcosine from creatinine: step 3/3. The polypeptide is N-carbamoylsarcosine amidase (Arthrobacter sp).